The primary structure comprises 490 residues: Bifunctional protein HldE (490 aa).

The interval 1–330 (MERKNVESLF…GSMGFQHSDS (330 aa)) is ribokinase. 205–208 (NRKE) is an ATP binding site. Residue D275 is part of the active site. The interval 356–490 (FTNGCFDLLH…DKILRAYGEE (135 aa)) is cytidylyltransferase.

It in the N-terminal section; belongs to the carbohydrate kinase PfkB family. The protein in the C-terminal section; belongs to the cytidylyltransferase family. As to quaternary structure, homodimer.

The enzyme catalyses D-glycero-beta-D-manno-heptose 7-phosphate + ATP = D-glycero-beta-D-manno-heptose 1,7-bisphosphate + ADP + H(+). It carries out the reaction D-glycero-beta-D-manno-heptose 1-phosphate + ATP + H(+) = ADP-D-glycero-beta-D-manno-heptose + diphosphate. The protein operates within nucleotide-sugar biosynthesis; ADP-L-glycero-beta-D-manno-heptose biosynthesis; ADP-L-glycero-beta-D-manno-heptose from D-glycero-beta-D-manno-heptose 7-phosphate: step 1/4. Its pathway is nucleotide-sugar biosynthesis; ADP-L-glycero-beta-D-manno-heptose biosynthesis; ADP-L-glycero-beta-D-manno-heptose from D-glycero-beta-D-manno-heptose 7-phosphate: step 3/4. In terms of biological role, catalyzes the phosphorylation of D-glycero-D-manno-heptose 7-phosphate at the C-1 position to selectively form D-glycero-beta-D-manno-heptose-1,7-bisphosphate. Functionally, catalyzes the ADP transfer from ATP to D-glycero-beta-D-manno-heptose 1-phosphate, yielding ADP-D-glycero-beta-D-manno-heptose. This Geobacter metallireducens (strain ATCC 53774 / DSM 7210 / GS-15) protein is Bifunctional protein HldE.